The following is a 143-amino-acid chain: Large ribosomal subunit protein uL11 (143 aa).

The protein belongs to the universal ribosomal protein uL11 family. Part of the ribosomal stalk of the 50S ribosomal subunit. Interacts with L10 and the large rRNA to form the base of the stalk. L10 forms an elongated spine to which L12 dimers bind in a sequential fashion forming a multimeric L10(L12)X complex. Post-translationally, one or more lysine residues are methylated.

In terms of biological role, forms part of the ribosomal stalk which helps the ribosome interact with GTP-bound translation factors. The polypeptide is Large ribosomal subunit protein uL11 (Ralstonia pickettii (strain 12J)).